The sequence spans 253 residues: Tryptophan synthase alpha chain (253 aa).

Active-site proton acceptor residues include Glu-47 and Asp-58.

Belongs to the TrpA family. As to quaternary structure, tetramer of two alpha and two beta chains.

It carries out the reaction (1S,2R)-1-C-(indol-3-yl)glycerol 3-phosphate + L-serine = D-glyceraldehyde 3-phosphate + L-tryptophan + H2O. Its pathway is amino-acid biosynthesis; L-tryptophan biosynthesis; L-tryptophan from chorismate: step 5/5. Its function is as follows. The alpha subunit is responsible for the aldol cleavage of indoleglycerol phosphate to indole and glyceraldehyde 3-phosphate. In Lactococcus lactis subsp. cremoris (strain MG1363), this protein is Tryptophan synthase alpha chain.